A 158-amino-acid polypeptide reads, in one-letter code: 2-C-methyl-D-erythritol 2,4-cyclodiphosphate synthase (158 aa).

Asp-9 and His-11 together coordinate a divalent metal cation. 4-CDP-2-C-methyl-D-erythritol 2-phosphate contacts are provided by residues 9–11 and 35–36; these read DVH and HS. Position 43 (His-43) interacts with a divalent metal cation. 4-CDP-2-C-methyl-D-erythritol 2-phosphate-binding positions include 57–59, 62–66, 101–107, 133–136, Phe-140, and Arg-143; these read DIG, FPDTD, AQKPKMA, and TTTE.

This sequence belongs to the IspF family. Homotrimer. A divalent metal cation serves as cofactor.

It carries out the reaction 4-CDP-2-C-methyl-D-erythritol 2-phosphate = 2-C-methyl-D-erythritol 2,4-cyclic diphosphate + CMP. It participates in isoprenoid biosynthesis; isopentenyl diphosphate biosynthesis via DXP pathway; isopentenyl diphosphate from 1-deoxy-D-xylulose 5-phosphate: step 4/6. Its function is as follows. Involved in the biosynthesis of isopentenyl diphosphate (IPP) and dimethylallyl diphosphate (DMAPP), two major building blocks of isoprenoid compounds. Catalyzes the conversion of 4-diphosphocytidyl-2-C-methyl-D-erythritol 2-phosphate (CDP-ME2P) to 2-C-methyl-D-erythritol 2,4-cyclodiphosphate (ME-CPP) with a corresponding release of cytidine 5-monophosphate (CMP). This Geobacillus sp. (strain WCH70) protein is 2-C-methyl-D-erythritol 2,4-cyclodiphosphate synthase.